The chain runs to 906 residues: Coatomer subunit beta' (906 aa).

8 WD repeats span residues 13–52, 55–94, 97–136, 140–180, 183–224, 227–266, 350–388, and 390–425; these read ARSD…LVKT, VCDL…RVHM, AHSD…SCSQ, GHTH…PNFT, GHEK…CVQT, GHAQ…LEST, SCEI…NKSF, and SAQE…KSFK. The residue at position 627 (Lys627) is an N6-acetyllysine. Residues 746–783 form a WD 9 repeat; it reads IRTGRLPEAAFLARTYLPSQVSRVVKLWRENLSKVNQK. The interval 837 to 862 is disordered; sequence EEAKGFQPSRSTAQQELDGKPASPTP. The residue at position 859 (Ser859) is a Phosphoserine. Phosphothreonine is present on Thr861. The stretch at 866-890 forms a coiled coil; it reads ASHTANKEEKSLLELEVDLDNLELE.

It belongs to the WD repeat COPB2 family. Oligomeric complex that consists of at least the alpha, beta, beta', gamma, delta, epsilon and zeta subunits. Probably interacts with PEX11A. Interacts with SCYL1. Interacts with JAGN1.

Its subcellular location is the cytoplasm. The protein resides in the cytosol. It localises to the golgi apparatus membrane. The protein localises to the cytoplasmic vesicle. It is found in the COPI-coated vesicle membrane. The coatomer is a cytosolic protein complex that binds to dilysine motifs and reversibly associates with Golgi non-clathrin-coated vesicles, which further mediate biosynthetic protein transport from the ER, via the Golgi up to the trans Golgi network. Coatomer complex is required for budding from Golgi membranes, and is essential for the retrograde Golgi-to-ER transport of dilysine-tagged proteins. In mammals, the coatomer can only be recruited by membranes associated to ADP-ribosylation factors (ARFs), which are small GTP-binding proteins; the complex also influences the Golgi structural integrity, as well as the processing, activity, and endocytic recycling of LDL receptors. In terms of biological role, this coatomer complex protein, essential for Golgi budding and vesicular trafficking, is a selective binding protein (RACK) for protein kinase C, epsilon type. It binds to Golgi membranes in a GTP-dependent manner. In Macaca fascicularis (Crab-eating macaque), this protein is Coatomer subunit beta' (COPB2).